A 518-amino-acid chain; its full sequence is Protein nucleotidyltransferase YdiU (518 aa).

8 residues coordinate ATP: Gly100, Gly102, Arg103, Lys123, Asp135, Gly136, Arg193, and Arg200. Asp270 acts as the Proton acceptor in catalysis. Mg(2+) contacts are provided by Asn271 and Asp280. An ATP-binding site is contributed by Asp280.

Belongs to the SELO family. Requires Mg(2+) as cofactor. It depends on Mn(2+) as a cofactor.

It carries out the reaction L-seryl-[protein] + ATP = 3-O-(5'-adenylyl)-L-seryl-[protein] + diphosphate. It catalyses the reaction L-threonyl-[protein] + ATP = 3-O-(5'-adenylyl)-L-threonyl-[protein] + diphosphate. The catalysed reaction is L-tyrosyl-[protein] + ATP = O-(5'-adenylyl)-L-tyrosyl-[protein] + diphosphate. The enzyme catalyses L-histidyl-[protein] + UTP = N(tele)-(5'-uridylyl)-L-histidyl-[protein] + diphosphate. It carries out the reaction L-seryl-[protein] + UTP = O-(5'-uridylyl)-L-seryl-[protein] + diphosphate. It catalyses the reaction L-tyrosyl-[protein] + UTP = O-(5'-uridylyl)-L-tyrosyl-[protein] + diphosphate. Functionally, nucleotidyltransferase involved in the post-translational modification of proteins. It can catalyze the addition of adenosine monophosphate (AMP) or uridine monophosphate (UMP) to a protein, resulting in modifications known as AMPylation and UMPylation. This Xanthomonas oryzae pv. oryzae (strain PXO99A) protein is Protein nucleotidyltransferase YdiU.